Here is a 399-residue protein sequence, read N- to C-terminus: S-adenosylmethionine synthase (399 aa).

H17 contacts ATP. Mg(2+) is bound at residue D19. Residue E45 coordinates K(+). Residues E58 and Q101 each contribute to the L-methionine site. Residues 101-111 (QSADIAMGVDQ) are flexible loop. Residues 177–179 (DGK), 244–245 (RF), D253, 259–260 (RK), A276, and K280 each bind ATP. D253 contributes to the L-methionine binding site. Residue K284 participates in L-methionine binding.

The protein belongs to the AdoMet synthase family. Homotetramer; dimer of dimers. Requires Mg(2+) as cofactor. The cofactor is K(+).

It localises to the cytoplasm. It catalyses the reaction L-methionine + ATP + H2O = S-adenosyl-L-methionine + phosphate + diphosphate. Its pathway is amino-acid biosynthesis; S-adenosyl-L-methionine biosynthesis; S-adenosyl-L-methionine from L-methionine: step 1/1. Its function is as follows. Catalyzes the formation of S-adenosylmethionine (AdoMet) from methionine and ATP. The overall synthetic reaction is composed of two sequential steps, AdoMet formation and the subsequent tripolyphosphate hydrolysis which occurs prior to release of AdoMet from the enzyme. The polypeptide is S-adenosylmethionine synthase (Bacillus mycoides (strain KBAB4) (Bacillus weihenstephanensis)).